A 163-amino-acid polypeptide reads, in one-letter code: Nucleotide-binding protein KPK_4305 (163 aa).

The protein belongs to the YajQ family.

Nucleotide-binding protein. This is Nucleotide-binding protein KPK_4305 from Klebsiella pneumoniae (strain 342).